Reading from the N-terminus, the 182-residue chain is ATP-dependent protease subunit HslV (182 aa).

Threonine 12 is an active-site residue. Residues glycine 167, cysteine 170, and threonine 173 each coordinate Na(+).

The protein belongs to the peptidase T1B family. HslV subfamily. As to quaternary structure, a double ring-shaped homohexamer of HslV is capped on each side by a ring-shaped HslU homohexamer. The assembly of the HslU/HslV complex is dependent on binding of ATP.

Its subcellular location is the cytoplasm. The catalysed reaction is ATP-dependent cleavage of peptide bonds with broad specificity.. With respect to regulation, allosterically activated by HslU binding. Protease subunit of a proteasome-like degradation complex believed to be a general protein degrading machinery. The protein is ATP-dependent protease subunit HslV of Acidiphilium cryptum (strain JF-5).